The sequence spans 506 residues: Glutamate--tRNA ligase (506 aa).

A 'HIGH' region motif is present at residues 21-31 (PSPTGIPHVGM). Residues 265–269 (KLSKR) carry the 'KMSKS' region motif. Residue lysine 268 coordinates ATP.

It belongs to the class-I aminoacyl-tRNA synthetase family. Glutamate--tRNA ligase type 1 subfamily. As to quaternary structure, monomer.

Its subcellular location is the cytoplasm. It carries out the reaction tRNA(Glu) + L-glutamate + ATP = L-glutamyl-tRNA(Glu) + AMP + diphosphate. In terms of biological role, catalyzes the attachment of glutamate to tRNA(Glu) in a two-step reaction: glutamate is first activated by ATP to form Glu-AMP and then transferred to the acceptor end of tRNA(Glu). In Bifidobacterium adolescentis (strain ATCC 15703 / DSM 20083 / NCTC 11814 / E194a), this protein is Glutamate--tRNA ligase.